A 479-amino-acid polypeptide reads, in one-letter code: Proline--tRNA ligase (479 aa).

This sequence belongs to the class-II aminoacyl-tRNA synthetase family. ProS type 3 subfamily. Homodimer.

It is found in the cytoplasm. It catalyses the reaction tRNA(Pro) + L-proline + ATP = L-prolyl-tRNA(Pro) + AMP + diphosphate. Functionally, catalyzes the attachment of proline to tRNA(Pro) in a two-step reaction: proline is first activated by ATP to form Pro-AMP and then transferred to the acceptor end of tRNA(Pro). The sequence is that of Proline--tRNA ligase from Agathobacter rectalis (strain ATCC 33656 / DSM 3377 / JCM 17463 / KCTC 5835 / VPI 0990) (Eubacterium rectale).